Here is a 1233-residue protein sequence, read N- to C-terminus: MANGVIPPPGGASPLPQVRVPLEEPPLSPDTEEEDDDLGKTLAVSRFGDLISKPPAWDPEKPSRSFSERDFAFHRHISHHTHHPLSARLPPPHKLRRLPPTFARHTRRKRKKEKTSAPPSEGTPPIQEEGGAGAHEGEEEEEEEEEGESETEAVEPPPSGSPQKAKFSIGSDEDDSPGLPGKAAFTKPLPSVGPRSDKSPQRSVSSSSPRARAPRVAGERSRPWSPSASYDLRERLCPGSALGNPGGPEQQVPTDEAEAQMLGSADLDDMKSHRLEDNPGVRRHLVKEPSRVQGGRGSRGGLTPTLRRKKKKQQPDRRPHEVFVELNELMLDRSQEPHWRETARWIKFEEDVEEETERWGKPHVASLSFRSLLELRRTIAHGAALLDLEQTTLPGIAHLVVETMIVSDQIRPEDRASVLRTLLLKHCHPNDDKDCGSFPRNPSSSSVNSVLGNHHATPSHGPDGAVPTMADDLGEPAPLWPHDPDAKERPLHMPGGDGHRGKSLKLLEKIPEDAEATVVLVGCVPFLEQPAAAFVRLSEAVLLESVLEVPVPVRFLFVMLGPSHISTDYHELGRSIATLMSDKLFHEAAYQADDRQDLLGAISEFLDGSIVIPPSEVEGRDLLRSVAAFQRELLRKRREREQTKVEMTTRGGYLAPGKELALELGGSDAAPEDDPLLRTGSVFGGLIRDVKRRYPHYPSDLRDALHSQCVAAVLFIYFAALSPAITFGGLLGEKTEGLMGVSELIVSTAVLGVLFSLLGAQPLLVVGFSGPLLVFEGAFFKFCQAQDLEYLTGRVWVGLWLVVFVLALVGAEGTFLVRYISPFTQEIFAFLISLIFIYETFHKLYKVFTEHPLLPFYPREGALEGAPEARLELNGSAPPPTEGPPGPRNQPNTALLSLILMLGTFLIAFFLRKFRNSRFLGGKARRIIGDFGIPISILLMVLVDYSITDTYTQKLTVPTGLSVTSPHKRTWFIPPLGSARPFPPWMMVAAAVPALLVLILIFMETQITALIVSQKARRLLKGSGFHLDLLLIGSLGGLCGLFGLPWLTAATVRSVTHVNALTVMRTAIAPGDKPQIQEVREQRVTGVLIASLVGLSIVMGAVLRRIPLAVLFGIFLYMGVTSLSGIQLSQRLLLILMPAKHHPEQPYVTKVKTWRMHLFTCIQLACIALLWVVKSTAASLAFPFLLLLTVPLRRCLLPRLFQDRELQALDSEDAEPNFDEDGQDEYNELHMPV.

Positions 1 to 11 are enriched in pro residues; the sequence is MANGVIPPPGG. Disordered stretches follow at residues 1–320 and 431–500; these read MANG…RRPH and DDKD…DGHR. Residues 1–709 are Cytoplasmic-facing; the sequence is MANGVIPPPG…DLRDALHSQC (709 aa). Over residues 58–73 the composition is skewed to basic and acidic residues; sequence DPEKPSRSFSERDFAF. 2 stretches are compositionally biased toward basic residues: residues 74-97 and 104-113; these read HRHISHHTHHPLSARLPPPHKLRR and RHTRRKRKKE. Positions 137–153 are enriched in acidic residues; that stretch reads GEEEEEEEEEGESETEA. Residues S168, S171, S176, and S199 each carry the phosphoserine modification. A compositionally biased stretch (low complexity) spans 201–216; it reads QRSVSSSSPRARAPRV. The span at 268–290 shows a compositional bias: basic and acidic residues; that stretch reads DDMKSHRLEDNPGVRRHLVKEPS. Residue R296 is modified to Omega-N-methylarginine. A compositionally biased stretch (low complexity) spans 437 to 450; it reads SFPRNPSSSSVNSV. The segment covering 482-500 has biased composition (basic and acidic residues); the sequence is HDPDAKERPLHMPGGDGHR. 4 consecutive transmembrane segments (helical) span residues 710-732, 738-775, 795-817, and 827-848; these read VAAVLFIYFAALSPAITFGGLLG, LMGVSELIVSTAVLGVLFSLLGAQPLLVVGFSGPLLVF, VWVGLWLVVFVLALVGAEGTFLV, and IFAFLISLIFIYETFHKLYKVF. The membrane (anion exchange) stretch occupies residues 710-1233; the sequence is VAAVLFIYFA…DEYNELHMPV (524 aa). Residue N874 is glycosylated (N-linked (GlcNAc...) asparagine). A helical membrane pass occupies residues 894 to 911; that stretch reads ALLSLILMLGTFLIAFFL. Topologically, residues 912 to 926 are cytoplasmic; it reads RKFRNSRFLGGKARR. 5 helical membrane-spanning segments follow: residues 927-947, 981-1003, 1029-1050, 1084-1129, and 1156-1192; these read IIGDFGIPISILLMVLVDYSI, PFPPWMMVAAAVPALLVLILIFM, LLLIGSLGGLCGLFGLPWLTAA, VTGV…IQLS, and MHLFTCIQLACIALLWVVKSTAASLAFPFLLLLTVPL. C1166 carries the S-palmitoyl cysteine lipid modification.

Belongs to the anion exchanger (TC 2.A.31) family.

The protein resides in the cell membrane. It catalyses the reaction hydrogencarbonate(in) + chloride(out) = hydrogencarbonate(out) + chloride(in). Sodium-independent anion exchanger which mediates the electroneutral exchange of chloride for bicarbonate ions across the cell membrane. May be involved in the regulation of intracellular pH, and the modulation of cardiac action potential. The protein is Anion exchange protein 3 (SLC4A3) of Oryctolagus cuniculus (Rabbit).